The primary structure comprises 216 residues: MOB kinase activator 1B (216 aa).

Ser2 bears the N-acetylserine mark. 2 positions are modified to phosphothreonine; by STK4/MST1: Thr12 and Thr35. 4 residues coordinate Zn(2+): Cys79, Cys84, His161, and His166.

The protein belongs to the MOB1/phocein family. Binds STK38L. Interacts with LATS1 and LATS2. In terms of processing, phosphorylated by STK3/MST2 and STK4/MST1 and this phosphorylation enhances its binding to LATS1. Adrenal gland, bone marrow, brain, lung, placenta, prostate, salivary gland, skeletal muscle, testis, thymus, thyroid gland, uterus, colon with mucosa, fetal brain and fetal liver.

It localises to the cytoplasm. The protein localises to the nucleus. In terms of biological role, activator of LATS1/2 in the Hippo signaling pathway which plays a pivotal role in organ size control and tumor suppression by restricting proliferation and promoting apoptosis. The core of this pathway is composed of a kinase cascade wherein STK3/MST2 and STK4/MST1, in complex with its regulatory protein SAV1, phosphorylates and activates LATS1/2 in complex with its regulatory protein MOB1, which in turn phosphorylates and inactivates YAP1 oncoprotein and WWTR1/TAZ. Phosphorylation of YAP1 by LATS1/2 inhibits its translocation into the nucleus to regulate cellular genes important for cell proliferation, cell death, and cell migration. Stimulates the kinase activity of STK38L. The polypeptide is MOB kinase activator 1B (Homo sapiens (Human)).